The primary structure comprises 552 residues: Chaperonin GroEL (552 aa).

ATP-binding positions include 30-33 (TLGP), K51, 87-91 (DGTTT), G415, and D499.

The protein belongs to the chaperonin (HSP60) family. Forms a cylinder of 14 subunits composed of two heptameric rings stacked back-to-back. Interacts with the co-chaperonin GroES.

It is found in the cytoplasm. It catalyses the reaction ATP + H2O + a folded polypeptide = ADP + phosphate + an unfolded polypeptide.. Together with its co-chaperonin GroES, plays an essential role in assisting protein folding. The GroEL-GroES system forms a nano-cage that allows encapsulation of the non-native substrate proteins and provides a physical environment optimized to promote and accelerate protein folding. This Hamiltonella defensa subsp. Acyrthosiphon pisum (strain 5AT) protein is Chaperonin GroEL.